We begin with the raw amino-acid sequence, 558 residues long: Glucose-6-phosphate isomerase (558 aa).

Residue glutamate 363 is the Proton donor of the active site. Active-site residues include histidine 394 and lysine 522.

This sequence belongs to the GPI family.

It localises to the cytoplasm. The enzyme catalyses alpha-D-glucose 6-phosphate = beta-D-fructose 6-phosphate. Its pathway is carbohydrate biosynthesis; gluconeogenesis. The protein operates within carbohydrate degradation; glycolysis; D-glyceraldehyde 3-phosphate and glycerone phosphate from D-glucose: step 2/4. Catalyzes the reversible isomerization of glucose-6-phosphate to fructose-6-phosphate. This Blochmanniella floridana protein is Glucose-6-phosphate isomerase.